The sequence spans 227 residues: Cytochrome c oxidase subunit 2 (227 aa).

At 1–14 (MAYPLQMGLQDATS) the chain is on the mitochondrial intermembrane side. A helical membrane pass occupies residues 15 to 45 (PIMEELLHFHDHTLMIVFLISSLVLYIISLM). Residues 46–59 (LTTKLTHTSTMDAQ) are Mitochondrial matrix-facing. The helical transmembrane segment at 60-87 (EVETVWTILPAIILILIALPSLRILYMM) threads the bilayer. At 88-227 (DEINNPSLTV…HFEKWSTSML (140 aa)) the chain is on the mitochondrial intermembrane side. Cu cation-binding residues include His-161, Cys-196, Glu-198, Cys-200, His-204, and Met-207. Position 198 (Glu-198) interacts with Mg(2+).

The protein belongs to the cytochrome c oxidase subunit 2 family. Component of the cytochrome c oxidase (complex IV, CIV), a multisubunit enzyme composed of 14 subunits. The complex is composed of a catalytic core of 3 subunits MT-CO1, MT-CO2 and MT-CO3, encoded in the mitochondrial DNA, and 11 supernumerary subunits COX4I, COX5A, COX5B, COX6A, COX6B, COX6C, COX7A, COX7B, COX7C, COX8 and NDUFA4, which are encoded in the nuclear genome. The complex exists as a monomer or a dimer and forms supercomplexes (SCs) in the inner mitochondrial membrane with NADH-ubiquinone oxidoreductase (complex I, CI) and ubiquinol-cytochrome c oxidoreductase (cytochrome b-c1 complex, complex III, CIII), resulting in different assemblies (supercomplex SCI(1)III(2)IV(1) and megacomplex MCI(2)III(2)IV(2)). Found in a complex with TMEM177, COA6, COX18, COX20, SCO1 and SCO2. Interacts with TMEM177 in a COX20-dependent manner. Interacts with COX20. Interacts with COX16. It depends on Cu cation as a cofactor.

The protein localises to the mitochondrion inner membrane. It carries out the reaction 4 Fe(II)-[cytochrome c] + O2 + 8 H(+)(in) = 4 Fe(III)-[cytochrome c] + 2 H2O + 4 H(+)(out). In terms of biological role, component of the cytochrome c oxidase, the last enzyme in the mitochondrial electron transport chain which drives oxidative phosphorylation. The respiratory chain contains 3 multisubunit complexes succinate dehydrogenase (complex II, CII), ubiquinol-cytochrome c oxidoreductase (cytochrome b-c1 complex, complex III, CIII) and cytochrome c oxidase (complex IV, CIV), that cooperate to transfer electrons derived from NADH and succinate to molecular oxygen, creating an electrochemical gradient over the inner membrane that drives transmembrane transport and the ATP synthase. Cytochrome c oxidase is the component of the respiratory chain that catalyzes the reduction of oxygen to water. Electrons originating from reduced cytochrome c in the intermembrane space (IMS) are transferred via the dinuclear copper A center (CU(A)) of subunit 2 and heme A of subunit 1 to the active site in subunit 1, a binuclear center (BNC) formed by heme A3 and copper B (CU(B)). The BNC reduces molecular oxygen to 2 water molecules using 4 electrons from cytochrome c in the IMS and 4 protons from the mitochondrial matrix. This is Cytochrome c oxidase subunit 2 (MT-CO2) from Halichoerus grypus (Gray seal).